Reading from the N-terminus, the 441-residue chain is Homoserine dehydrogenase (441 aa).

NADP(+) contacts are provided by N17 and V18. The NAD(+) site is built by V18, V37, and G47. V18 contacts NADPH. NADP(+)-binding residues include R49, R50, and K107. An NADPH-binding site is contributed by R49. K107 lines the NADPH pocket. Na(+)-binding residues include E131, V134, G136, and I138. The NADP(+) site is built by G189 and E192. L-homoserine contacts are provided by E192 and D203. The active-site Proton donor is the K207. An NADP(+)-binding site is contributed by G309. G309 is an NAD(+) binding site. G309 provides a ligand contact to NADPH. In terms of domain architecture, ACT spans 356-435 (YVSMNVADKP…VVQGVSSVIR (80 aa)).

This sequence belongs to the homoserine dehydrogenase family. Requires a metal cation as cofactor.

The catalysed reaction is L-homoserine + NADP(+) = L-aspartate 4-semialdehyde + NADPH + H(+). It catalyses the reaction L-homoserine + NAD(+) = L-aspartate 4-semialdehyde + NADH + H(+). It participates in amino-acid biosynthesis; L-methionine biosynthesis via de novo pathway; L-homoserine from L-aspartate: step 3/3. Its pathway is amino-acid biosynthesis; L-threonine biosynthesis; L-threonine from L-aspartate: step 3/5. In terms of biological role, catalyzes the conversion of L-aspartate-beta-semialdehyde (L-Asa) to L-homoserine (L-Hse), the third step in the biosynthesis of threonine and methionine from aspartate. The chain is Homoserine dehydrogenase (hom) from Mycobacterium tuberculosis (strain CDC 1551 / Oshkosh).